The primary structure comprises 155 residues: Endoribonuclease YbeY (155 aa).

Zn(2+) is bound by residues His114, His118, and His124.

This sequence belongs to the endoribonuclease YbeY family. Requires Zn(2+) as cofactor.

The protein resides in the cytoplasm. Functionally, single strand-specific metallo-endoribonuclease involved in late-stage 70S ribosome quality control and in maturation of the 3' terminus of the 16S rRNA. This is Endoribonuclease YbeY from Escherichia coli O157:H7.